Reading from the N-terminus, the 185-residue chain is Hypoxanthine/guanine phosphoribosyltransferase (185 aa).

This sequence belongs to the purine/pyrimidine phosphoribosyltransferase family. Archaeal HPRT subfamily. In terms of assembly, homodimer.

The protein localises to the cytoplasm. The catalysed reaction is IMP + diphosphate = hypoxanthine + 5-phospho-alpha-D-ribose 1-diphosphate. It carries out the reaction GMP + diphosphate = guanine + 5-phospho-alpha-D-ribose 1-diphosphate. The protein operates within purine metabolism; IMP biosynthesis via salvage pathway; IMP from hypoxanthine: step 1/1. Functionally, catalyzes a salvage reaction resulting in the formation of IMP that is energically less costly than de novo synthesis. In Methanococcus maripaludis (strain C6 / ATCC BAA-1332), this protein is Hypoxanthine/guanine phosphoribosyltransferase.